We begin with the raw amino-acid sequence, 153 residues long: Large ribosomal subunit protein uL30 (153 aa).

This sequence belongs to the universal ribosomal protein uL30 family. In terms of assembly, part of the 50S ribosomal subunit.

This is Large ribosomal subunit protein uL30 from Methanosarcina mazei (strain ATCC BAA-159 / DSM 3647 / Goe1 / Go1 / JCM 11833 / OCM 88) (Methanosarcina frisia).